The following is a 212-amino-acid chain: Ribosomal RNA small subunit methyltransferase G (212 aa).

S-adenosyl-L-methionine contacts are provided by residues Gly73, 127-128, and Arg143; that span reads IE.

This sequence belongs to the methyltransferase superfamily. RNA methyltransferase RsmG family.

The protein resides in the cytoplasm. The enzyme catalyses guanosine(527) in 16S rRNA + S-adenosyl-L-methionine = N(7)-methylguanosine(527) in 16S rRNA + S-adenosyl-L-homocysteine. Specifically methylates the N7 position of guanine in position 527 of 16S rRNA. The sequence is that of Ribosomal RNA small subunit methyltransferase G from Methylobacterium sp. (strain 4-46).